Reading from the N-terminus, the 217-residue chain is Orotidine 5'-phosphate decarboxylase (217 aa).

Residues aspartate 14, lysine 36, 64–73 (DFKVADIPST), serine 120, 172–182 (PGVGAQGGNLS), glycine 197, and arginine 198 each bind substrate. The Proton donor role is filled by lysine 66.

It belongs to the OMP decarboxylase family. Type 1 subfamily. In terms of assembly, homodimer.

The catalysed reaction is orotidine 5'-phosphate + H(+) = UMP + CO2. It functions in the pathway pyrimidine metabolism; UMP biosynthesis via de novo pathway; UMP from orotate: step 2/2. Its function is as follows. Catalyzes the decarboxylation of orotidine 5'-monophosphate (OMP) to uridine 5'-monophosphate (UMP). This Methanococcus maripaludis (strain DSM 14266 / JCM 13030 / NBRC 101832 / S2 / LL) protein is Orotidine 5'-phosphate decarboxylase.